Consider the following 413-residue polypeptide: Divalent metal cation transporter MntH (413 aa).

11 helical membrane passes run Leu19 to Ala39, Ala46 to Ile66, Val94 to Ile114, Leu122 to Ile142, Val156 to Gln176, Ala196 to His216, Ile241 to Phe261, Ile290 to Gly310, Ala329 to Leu349, Val350 to Phe370, and Ile389 to Leu409.

This sequence belongs to the NRAMP family.

The protein resides in the cell inner membrane. In terms of biological role, h(+)-stimulated, divalent metal cation uptake system. This chain is Divalent metal cation transporter MntH, found in Klebsiella pneumoniae subsp. pneumoniae (strain ATCC 700721 / MGH 78578).